Reading from the N-terminus, the 155-residue chain is Endoribonuclease YbeY (155 aa).

Zn(2+) is bound by residues histidine 120, histidine 124, and histidine 130.

Belongs to the endoribonuclease YbeY family. It depends on Zn(2+) as a cofactor.

Its subcellular location is the cytoplasm. Functionally, single strand-specific metallo-endoribonuclease involved in late-stage 70S ribosome quality control and in maturation of the 3' terminus of the 16S rRNA. The sequence is that of Endoribonuclease YbeY from Alkaliphilus metalliredigens (strain QYMF).